The following is a 155-amino-acid chain: Ribosomal RNA large subunit methyltransferase H (155 aa).

S-adenosyl-L-methionine-binding positions include leucine 73, glycine 104, and 123 to 128 (LSPLTL).

Belongs to the RNA methyltransferase RlmH family. Homodimer.

It is found in the cytoplasm. The catalysed reaction is pseudouridine(1915) in 23S rRNA + S-adenosyl-L-methionine = N(3)-methylpseudouridine(1915) in 23S rRNA + S-adenosyl-L-homocysteine + H(+). Functionally, specifically methylates the pseudouridine at position 1915 (m3Psi1915) in 23S rRNA. The sequence is that of Ribosomal RNA large subunit methyltransferase H from Pseudomonas savastanoi pv. phaseolicola (strain 1448A / Race 6) (Pseudomonas syringae pv. phaseolicola (strain 1448A / Race 6)).